The primary structure comprises 113 residues: Putative pterin-4-alpha-carbinolamine dehydratase (113 aa).

It belongs to the pterin-4-alpha-carbinolamine dehydratase family.

The catalysed reaction is (4aS,6R)-4a-hydroxy-L-erythro-5,6,7,8-tetrahydrobiopterin = (6R)-L-erythro-6,7-dihydrobiopterin + H2O. The chain is Putative pterin-4-alpha-carbinolamine dehydratase from Nitrosomonas eutropha (strain DSM 101675 / C91 / Nm57).